Here is a 206-residue protein sequence, read N- to C-terminus: Probable nicotinate-nucleotide adenylyltransferase (206 aa).

It belongs to the NadD family.

The enzyme catalyses nicotinate beta-D-ribonucleotide + ATP + H(+) = deamido-NAD(+) + diphosphate. Its pathway is cofactor biosynthesis; NAD(+) biosynthesis; deamido-NAD(+) from nicotinate D-ribonucleotide: step 1/1. In terms of biological role, catalyzes the reversible adenylation of nicotinate mononucleotide (NaMN) to nicotinic acid adenine dinucleotide (NaAD). The protein is Probable nicotinate-nucleotide adenylyltransferase of Paenarthrobacter aurescens (strain TC1).